A 297-amino-acid polypeptide reads, in one-letter code: tRNA dimethylallyltransferase (297 aa).

15-22 (GPTASGKS) is a binding site for ATP. Residue 17 to 22 (TASGKS) coordinates substrate. Interaction with substrate tRNA regions lie at residues 40–43 (DSMQ) and 164–168 (QRIVR).

It belongs to the IPP transferase family. As to quaternary structure, monomer. The cofactor is Mg(2+).

The enzyme catalyses adenosine(37) in tRNA + dimethylallyl diphosphate = N(6)-dimethylallyladenosine(37) in tRNA + diphosphate. In terms of biological role, catalyzes the transfer of a dimethylallyl group onto the adenine at position 37 in tRNAs that read codons beginning with uridine, leading to the formation of N6-(dimethylallyl)adenosine (i(6)A). The protein is tRNA dimethylallyltransferase of Rhizobium johnstonii (strain DSM 114642 / LMG 32736 / 3841) (Rhizobium leguminosarum bv. viciae).